A 437-amino-acid polypeptide reads, in one-letter code: Probable E3 ubiquitin-protein ligase TRIML2 (437 aa).

A B box-type zinc finger spans residues 14-55 (TEDAYCETHLEPTRLFCDVDQITLCSKCFQSQEHKHHMVCGI). Zn(2+) contacts are provided by C19, H22, C41, and H47. A coiled-coil region spans residues 55 to 200 (IQEAAENYRK…IVELEKKCGE (146 aa)). The B30.2/SPRY domain occupies 231 to 429 (DLSLCHIRGL…DSLTILQHGP (199 aa)).

The catalysed reaction is S-ubiquitinyl-[E2 ubiquitin-conjugating enzyme]-L-cysteine + [acceptor protein]-L-lysine = [E2 ubiquitin-conjugating enzyme]-L-cysteine + N(6)-ubiquitinyl-[acceptor protein]-L-lysine.. It participates in protein modification; protein ubiquitination. This is Probable E3 ubiquitin-protein ligase TRIML2 from Homo sapiens (Human).